The primary structure comprises 318 residues: tRNA-cytidine(32) 2-sulfurtransferase (318 aa).

The segment at 1-29 (MNHVSSTKPDTAPSKHLTSSHIDATDQNN) is disordered. The segment covering 16–27 (HLTSSHIDATDQ) has biased composition (polar residues). The PP-loop motif motif lies at 64 to 69 (SGGKDS). Positions 139, 142, and 230 each coordinate [4Fe-4S] cluster.

It belongs to the TtcA family. In terms of assembly, homodimer. Mg(2+) serves as cofactor. Requires [4Fe-4S] cluster as cofactor.

The protein localises to the cytoplasm. The catalysed reaction is cytidine(32) in tRNA + S-sulfanyl-L-cysteinyl-[cysteine desulfurase] + AH2 + ATP = 2-thiocytidine(32) in tRNA + L-cysteinyl-[cysteine desulfurase] + A + AMP + diphosphate + H(+). The protein operates within tRNA modification. Its function is as follows. Catalyzes the ATP-dependent 2-thiolation of cytidine in position 32 of tRNA, to form 2-thiocytidine (s(2)C32). The sulfur atoms are provided by the cysteine/cysteine desulfurase (IscS) system. In Pseudoalteromonas atlantica (strain T6c / ATCC BAA-1087), this protein is tRNA-cytidine(32) 2-sulfurtransferase.